A 302-amino-acid polypeptide reads, in one-letter code: Elongation factor Ts (302 aa).

The involved in Mg(2+) ion dislocation from EF-Tu stretch occupies residues Thr-82–Val-85.

It belongs to the EF-Ts family.

The protein resides in the cytoplasm. Associates with the EF-Tu.GDP complex and induces the exchange of GDP to GTP. It remains bound to the aminoacyl-tRNA.EF-Tu.GTP complex up to the GTP hydrolysis stage on the ribosome. The sequence is that of Elongation factor Ts from Nitrosospira multiformis (strain ATCC 25196 / NCIMB 11849 / C 71).